We begin with the raw amino-acid sequence, 126 residues long: C-type natriuretic peptide 2 (126 aa).

The signal sequence occupies residues 1-22 (MAVCSSSSLILLTVFLSVAVET). Residues 23 to 102 (RPSSDRDEEQ…REKTRRWGRK (80 aa)) constitute a propeptide that is removed on maturation. A disordered region spans residues 44 to 80 (SLILAPPTSNDSTEGSSGSPEPPTPSEAPVLIHGDRG). A disulfide bridge links Cys110 with Cys126.

It belongs to the natriuretic peptide family. As to expression, brain and spinal cord.

The protein localises to the secreted. Exhibits natriuretic and vasodepressant activity. Has cGMP-stimulating activity. May help to regulate body fluid homeostasis in a variety of aquatic environments. This Oryzias latipes (Japanese rice fish) protein is C-type natriuretic peptide 2.